Reading from the N-terminus, the 791-residue chain is Subtilisin-like protease SBT5.6 (791 aa).

Residues 1-20 form the signal peptide; the sequence is MKKLTSLFPLLFLIPLLASC. Residues 21 to 108 constitute a propeptide, activation peptide; the sequence is AEEKQVYIVY…KSHPRKYEAH (88 aa). In terms of domain architecture, Inhibitor I9 spans 26-104; the sequence is VYIVYFGEHK…VSVFKSHPRK (79 aa). Residues 134–645 enclose the Peptidase S8 domain; that stretch reads ADDRFRVGRN…SGHFRPTKAA (512 aa). Asp-160 serves as the catalytic Charge relay system. N-linked (GlcNAc...) asparagine glycosylation is found at Asn-193 and Asn-219. The Charge relay system role is filled by His-235. Residues 400–494 form the PA domain; sequence FAPLVYASNV…VTPTVVDKIL (95 aa). A glycan (N-linked (GlcNAc...) asparagine) is linked at Asn-417. Ser-578 (charge relay system) is an active-site residue. N-linked (GlcNAc...) asparagine glycans are attached at residues Asn-666, Asn-713, and Asn-761.

This sequence belongs to the peptidase S8 family.

Its subcellular location is the secreted. In Arabidopsis thaliana (Mouse-ear cress), this protein is Subtilisin-like protease SBT5.6.